We begin with the raw amino-acid sequence, 1946 residues long: MEESEGQKCEPNLPPSGDSRQMPQQGRSNLHVTSQEDAACRRPRERLSNGNARAQVSKPARNIPRRHTLGGPRSSKEILGMQPSEMDRKREAFLEHLKQKYPHHATAIMGHQERLRDQTKSPKLSHSPQPPNLGDPVEHLSETSGDSLEAMSEGEVPSPFARGSRTRASLPVVRSANQTKERSLGVLYLQYGDETKQLRMPNEVTSTDTIRALFVSAFPQQLTMKMLESPSVAIYIKDDSRNVYYELNDVRNIQDRSLLKVYNKDPSHAFNHMTKAVNGDMRMQREIVYARGDGLVAPRPGSVAHPPHVIPNSPPSTPVPHSLPPSPSRIPYGGSRPMAIPGNATIPRDRLSSLPVSRSISPSPSAILERRDVKPDEDMSSKNLVMFRNEGFYADPYLYHEGRMSIASSHGGHPLDVPDHVIAYHRTAIRSASAYCSPSLQAEMHMEQSLYRQKSRKYPDSHLPTLGSKTPPASPHRVGDLRMIDLHPHLNTHGPPHTLQPDRASPSRQSFKKEPGTLVYIEKPRNTSGLSSLVDLGPPLVEKQGFAYSTTTIPKDRETRERMQAMEKQIASLTGLVQSALFKGPITSSSKEASSEKMVKATANRNQADGAGTAHVSAGKVLGSVEFSLPPSQPLPAGTSPIHTSLLDMRRNVAELRLQLQQMRQLQLQNQEILRAMMKKAELEISNKVKETMKRLEDPVQRQRTLVEQERQKYLHEEERIVKKLCELEDFVEDLKKDSSSTGRVVTLKDVEDGAFLLRQVGEAVATLKGEFPTLQNKMRAVLRIEVEAVRFLKEEPHKLDSLLKRVRSMTDVLTMLRRHVTDGLLKGTDASQAAQYVAMEKATAAEVLKHQEETAHAPGQPLHCSTGSPGDVKSEVVPLSTMTVHHVQSSPVVMQPSQHSSALMNPAQNLPGGTRPHTASPPAITQEVTSAQSAPGPQSPQTPVNGSSMQSLFIEEIHSVSAKNRAVSIEKAEKKWEEKRQNLEHYNGKEFEKLLEEAQANIMKSIPNLEMPPASSPVSKGDAAGDKLELSEDSPNSEQELDKIGGKSPPPPPPPPRRSYLPGSGLTTTRSGDVVYTGRSMSKVSSEDPGPTPQTRATKCPPEEPASAWAPSPPPVPAPSSKEEEEEEEEGDKIMAELQAFQKCSFMDVNPNSHAEQSRANSHLKDTRAGATAPPKEKKNLEFYHEDVRKSDVECENGPQVESQKVTAGALRPSGPPKWERVMVDSISDTSRTSECRADTFTEENATPNKSLFRDSRNYSQKNVPKVSFSSSGLNSLEGEINKGPNVSGLQCAIPDLENQKLNFGKTKEIGQQGQENADKSHIPLPTRSAEFSIHDVKTQDQDVPVTGYGQVVLRSKVGRHANMNMNEDGESTPSSPSEEHTATDNIAFMITKTAVQVLSSGEVHDIVSQKGQDVQTVNIDGRKETASQHEGTEGEEPVVCLDKKPVIIIFDEPMDIRSAYKRLSTIFEECDEELERMLTEEKIEEEEEDENEDSGVRTSSQMSCEQVDSRSDRMGQKAETQSQPHVLSAELLTPGVQGVRKAEQRKLSSADSPDSGNKCGMVDDQFESPKKKFKFKFPKKQLAALTQAIRTGTKTGKKTLQVVVYEEEEEDGTLKQHKEAKRFEITRSQPEDALKTMARRQEQLSPEGTLPASRTDEIRKSTYRTLDSLEQTIKQLENTISEMSPRALVDTSCSSNRDCGASLPHMAQEVSPRSLLVLDEVPPAPEPPTSISPASRKGSSTTPQTSRMPVPMTSKNRPGSLDKASKQSKLQDPRQYRQANGSAKKAGGDCKPTSPSLPASKIPALSPSSGKSSSLPSASGDSSNLPNAPATKPSIASTPLSPQAGRSAHSASLIPSVSNGSLKFQSPPHAGKGHHHLSFALQTQNGRAAPTTSSSSSPPSPASPTSLNQGARGIRTIHTPSLASYKAQNGSSSKATPSTAKETS.

2 disordered regions span residues 1 to 83 (MEES…GMQP) and 113 to 176 (ERLR…VRSA). Residues 18 to 36 (DSRQMPQQGRSNLHVTSQE) are compositionally biased toward polar residues. Over residues 38-47 (AACRRPRERL) the composition is skewed to basic and acidic residues. Ser169 bears the Phosphoserine mark. Residue Tyr244 is modified to Phosphotyrosine. Disordered regions lie at residues 305 to 324 (HPPHVIPNSPPSTPVPHSLP) and 339 to 374 (AIPGNATIPRDRLSSLPVSRSISPSPSAILERRDVK). Residues 308 to 324 (HVIPNSPPSTPVPHSLP) show a composition bias toward pro residues. Residues 352-367 (SSLPVSRSISPSPSAI) are compositionally biased toward low complexity. Ser357 carries O-linked (GlcNAc) serine glycosylation. Residues Ser361 and Ser365 each carry the phosphoserine modification. Tyr393 bears the Phosphotyrosine mark. Residues 455–512 (SRKYPDSHLPTLGSKTPPASPHRVGDLRMIDLHPHLNTHGPPHTLQPDRASPSRQSFK) are disordered. Thr470 carries the phosphothreonine modification. At Ser474 the chain carries Phosphoserine. The segment covering 477–488 (RVGDLRMIDLHP) has biased composition (basic and acidic residues). Coiled coils occupy residues 557–581 (RETRERMQAMEKQIASLTGLVQSAL) and 644–685 (TSLL…ELEI). The residue at position 809 (Ser809) is a Phosphoserine. 2 disordered regions span residues 853 to 875 (EETAHAPGQPLHCSTGSPGDVKS) and 891 to 947 (SPVV…PVNG). Polar residues-rich tracts occupy residues 891-909 (SPVVMQPSQHSSALMNPAQ) and 927-947 (QEVTSAQSAPGPQSPQTPVNG). Positions 962–990 (SAKNRAVSIEKAEKKWEEKRQNLEHYNGK) form a coiled coil. The tract at residues 1008-1221 (PNLEMPPASS…LRPSGPPKWE (214 aa)) is disordered. 4 positions are modified to phosphoserine: Ser1032, Ser1035, Ser1038, and Ser1049. Residues 1049–1058 (SPPPPPPPPR) show a composition bias toward pro residues. Over residues 1151–1162 (NPNSHAEQSRAN) the composition is skewed to polar residues. The segment covering 1176 to 1194 (PKEKKNLEFYHEDVRKSDV) has biased composition (basic and acidic residues). Ser1466 is modified (phosphoserine). Positions 1469–1495 (FEECDEELERMLTEEKIEEEEEDENED) form a coiled coil. Disordered stretches follow at residues 1482–1567 (EEKI…VDDQ), 1622–1664 (AKRF…RKST), and 1691–1946 (VDTS…KETS). Acidic residues predominate over residues 1484-1495 (KIEEEEEDENED). Residues 1498 to 1508 (VRTSSQMSCEQ) show a composition bias toward polar residues. Composition is skewed to basic and acidic residues over residues 1509 to 1518 (VDSRSDRMGQ) and 1622 to 1644 (AKRFEITRSQPEDALKTMARRQE). Positions 1659-1688 (EIRKSTYRTLDSLEQTIKQLENTISEMSPR) form a coiled coil. Positions 1739-1759 (KGSSTTPQTSRMPVPMTSKNR) are enriched in polar residues. Ser1741 bears the Phosphoserine mark. Positions 1765–1777 (KASKQSKLQDPRQ) are enriched in basic and acidic residues. Residues 1806-1825 (ALSPSSGKSSSLPSASGDSS) show a composition bias toward low complexity. Ser1843 carries the post-translational modification Phosphoserine. The span at 1851 to 1866 (HSASLIPSVSNGSLKF) shows a compositional bias: polar residues. A compositionally biased stretch (low complexity) spans 1890–1899 (AAPTTSSSSS). 3 positions are modified to phosphoserine: Ser1899, Ser1902, and Ser1905. Polar residues predominate over residues 1920–1946 (HTPSLASYKAQNGSSSKATPSTAKETS).

As to quaternary structure, interacts with CPNE4 (via VWFA domain). In terms of tissue distribution, expressed predominantly in the notochord and mesonephros during embryogenesis as well as in other areas such as the epithalamus sulcus, lens vesicle, inner retinal layer, heart, hepatic primordial surface, infundibulum, surface ectoderm, hind gut and limb bud mesenchyme. In adults, expressed in a range of tissues including the nucleus pulposus, corpus callosum, kidney, cardiac muscle, Sertoli cells and hair follicles.

It localises to the cytoplasm. Its subcellular location is the cytoskeleton. The protein localises to the microtubule organizing center. The protein resides in the centrosome. Functionally, required for normal development of intervertebral disks. This is Sickle tail protein from Mus musculus (Mouse).